The chain runs to 435 residues: uncharacterized protein (435 aa).

At Ser-47 the chain carries Phosphoserine. 2 disordered regions span residues 174 to 210 (LKKKKESIKTAQTTEAQGADHNEEDEEDEEDEEDDED) and 290 to 372 (KAEA…EDNK). A compositionally biased stretch (acidic residues) spans 195–210 (NEEDEEDEEDEEDDED). Positions 290-304 (KAEATGEAHSKDVSA) are enriched in basic and acidic residues. The span at 308–318 (SANTTTSFDET) shows a compositional bias: polar residues. Basic and acidic residues-rich tracts occupy residues 322–340 (EDEKPKSEGAEEESKKEAN) and 347–361 (VADRKEDLKSNKVND).

Its subcellular location is the cytoplasm. This is an uncharacterized protein from Saccharomyces cerevisiae (strain ATCC 204508 / S288c) (Baker's yeast).